The primary structure comprises 102 residues: Large ribosomal subunit protein uL24c (102 aa).

The protein belongs to the universal ribosomal protein uL24 family. As to quaternary structure, part of the 50S ribosomal subunit.

The protein localises to the plastid. It is found in the chloroplast. In terms of biological role, one of two assembly initiator proteins, it binds directly to the 5'-end of the 23S rRNA, where it nucleates assembly of the 50S subunit. In Rhodomonas salina (Cryptomonas salina), this protein is Large ribosomal subunit protein uL24c (rpl24).